The primary structure comprises 217 residues: Phosphatidylserine decarboxylase proenzyme (217 aa).

Catalysis depends on Ser182, which acts as the Schiff-base intermediate with substrate; via pyruvic acid. Ser182 is subject to Pyruvic acid (Ser); by autocatalysis.

Belongs to the phosphatidylserine decarboxylase family. PSD-A subfamily. As to quaternary structure, heterodimer of a large membrane-associated beta subunit and a small pyruvoyl-containing alpha subunit. Requires pyruvate as cofactor. Is synthesized initially as an inactive proenzyme. Formation of the active enzyme involves a self-maturation process in which the active site pyruvoyl group is generated from an internal serine residue via an autocatalytic post-translational modification. Two non-identical subunits are generated from the proenzyme in this reaction, and the pyruvate is formed at the N-terminus of the alpha chain, which is derived from the carboxyl end of the proenzyme. The post-translation cleavage follows an unusual pathway, termed non-hydrolytic serinolysis, in which the side chain hydroxyl group of the serine supplies its oxygen atom to form the C-terminus of the beta chain, while the remainder of the serine residue undergoes an oxidative deamination to produce ammonia and the pyruvoyl prosthetic group on the alpha chain.

It localises to the cell membrane. The enzyme catalyses a 1,2-diacyl-sn-glycero-3-phospho-L-serine + H(+) = a 1,2-diacyl-sn-glycero-3-phosphoethanolamine + CO2. It participates in phospholipid metabolism; phosphatidylethanolamine biosynthesis; phosphatidylethanolamine from CDP-diacylglycerol: step 2/2. In terms of biological role, catalyzes the formation of phosphatidylethanolamine (PtdEtn) from phosphatidylserine (PtdSer). The polypeptide is Phosphatidylserine decarboxylase proenzyme (Prosthecochloris aestuarii (strain DSM 271 / SK 413)).